The primary structure comprises 140 residues: Large ribosomal subunit protein uL11 (140 aa).

This sequence belongs to the universal ribosomal protein uL11 family. Part of the ribosomal stalk of the 50S ribosomal subunit. Interacts with L10 and the large rRNA to form the base of the stalk. L10 forms an elongated spine to which L12 dimers bind in a sequential fashion forming a multimeric L10(L12)X complex. One or more lysine residues are methylated.

Functionally, forms part of the ribosomal stalk which helps the ribosome interact with GTP-bound translation factors. In Desulfovibrio desulfuricans (strain ATCC 27774 / DSM 6949 / MB), this protein is Large ribosomal subunit protein uL11.